The chain runs to 55 residues: Riparin-1.5 acid (55 aa).

The N-terminal stretch at 1–15 (MKIIVFLAVLMLVSA) is a signal peptide. Residues 16-41 (QVCLVSAAEMEHSSDNELSSRDLVKR) constitute a propeptide that is removed on maturation. Residues C47 and C53 are joined by a disulfide bond. A propeptide spanning residues 54 to 55 (NH) is cleaved from the precursor.

In terms of tissue distribution, expressed by the skin glands.

It localises to the secreted. This Crinia riparia (Streambank froglet) protein is Riparin-1.5 acid.